A 61-amino-acid chain; its full sequence is Small ribosomal subunit protein uS14B (61 aa).

Residues cysteine 24, cysteine 27, cysteine 40, and cysteine 43 each coordinate Zn(2+).

The protein belongs to the universal ribosomal protein uS14 family. Zinc-binding uS14 subfamily. In terms of assembly, part of the 30S ribosomal subunit. Contacts proteins S3 and S10. Zn(2+) is required as a cofactor.

Binds 16S rRNA, required for the assembly of 30S particles and may also be responsible for determining the conformation of the 16S rRNA at the A site. This is Small ribosomal subunit protein uS14B from Lacticaseibacillus paracasei (strain ATCC 334 / BCRC 17002 / CCUG 31169 / CIP 107868 / KCTC 3260 / NRRL B-441) (Lactobacillus paracasei).